The sequence spans 127 residues: uncharacterized protein (127 aa).

This is an uncharacterized protein from Human cytomegalovirus (strain Toledo) (HHV-5).